The chain runs to 200 residues: Cysteine dioxygenase type 1 (200 aa).

Residues histidine 86, histidine 88, and histidine 140 each contribute to the Fe cation site. Residues 93–157 (CFLKMLQGNL…TEPAVSLHLY (65 aa)) constitute a cross-link (3'-(S-cysteinyl)-tyrosine (Cys-Tyr)).

Belongs to the cysteine dioxygenase family. Monomer. Fe(2+) is required as a cofactor. The cofactor is Ni(2+). Zn(2+) serves as cofactor. Post-translationally, the thioether cross-link between Cys-93 and Tyr-157 plays a structural role through stabilizing the Fe(2+) ion, and prevents the production of highly damaging free hydroxyl radicals by holding the oxygen radical via hydroxyl hydrogen. As to expression, highly expressed in liver and placenta. Low expression in heart, brain and pancreas. Also detected in hepatoblastoma Hep-G2 cells.

It catalyses the reaction L-cysteine + O2 = 3-sulfino-L-alanine + H(+). It functions in the pathway organosulfur biosynthesis; taurine biosynthesis; hypotaurine from L-cysteine: step 1/2. Functionally, catalyzes the oxidation of cysteine to cysteine sulfinic acid with addition of molecular dioxygen. In Homo sapiens (Human), this protein is Cysteine dioxygenase type 1 (CDO1).